Here is a 213-residue protein sequence, read N- to C-terminus: Putative manganese efflux pump MntP (213 aa).

The next 7 membrane-spanning stretches (helical) occupy residues 6–26 (LGVL…GIGM), 34–54 (AFML…FGIL), 58–78 (ALGL…LFFL), 107–127 (GSGG…LFAP), 132–152 (LVVI…SLGT), 153–173 (VGAQ…IMTV), and 192–212 (LAGG…SASP).

Belongs to the MntP (TC 9.B.29) family.

Its subcellular location is the cell membrane. Functionally, probably functions as a manganese efflux pump. This is Putative manganese efflux pump MntP from Heliobacterium modesticaldum (strain ATCC 51547 / Ice1).